Reading from the N-terminus, the 134-residue chain is FK506-binding protein 2 (134 aa).

Positions 1-19 (MRILLLSALFLSLTTLVLS) are cleaved as a signal peptide. The region spanning 39-127 (GDTVHMHYRG…IFETELVQIE (89 aa)) is the PPIase FKBP-type domain. A Prevents secretion from ER motif is present at residues 131–134 (NDEL).

This sequence belongs to the FKBP-type PPIase family. FKBP2 subfamily.

The protein localises to the endoplasmic reticulum. The enzyme catalyses [protein]-peptidylproline (omega=180) = [protein]-peptidylproline (omega=0). With respect to regulation, inhibited by both FK506 and rapamycin. PPIases accelerate the folding of proteins. It catalyzes the cis-trans isomerization of proline imidic peptide bonds in oligopeptides. The chain is FK506-binding protein 2 (fpr2) from Aspergillus fumigatus (strain ATCC MYA-4609 / CBS 101355 / FGSC A1100 / Af293) (Neosartorya fumigata).